Here is a 375-residue protein sequence, read N- to C-terminus: Glycogen synthase kinase-3 homolog YGK3 (375 aa).

Positions 41-329 (VREGKRIGHG…ARQLMAHEFF (289 aa)) constitute a Protein kinase domain. ATP contacts are provided by residues 47–55 (IGHGSFGTV) and Lys74. Residue Asp173 is the Proton acceptor of the active site. Residue Ser211 is modified to Phosphoserine.

It belongs to the protein kinase superfamily. Ser/Thr protein kinase family.

It catalyses the reaction L-seryl-[protein] + ATP = O-phospho-L-seryl-[protein] + ADP + H(+). The enzyme catalyses L-threonyl-[protein] + ATP = O-phospho-L-threonyl-[protein] + ADP + H(+). In terms of biological role, required for heat stress-instigated phosphorylation of BCY1 which is involved in cell wall integrity signaling. Regulates activity of MSN2, a transcription factor that binds to the stress-response element (STRE). Probably promotes formation of a complex between MSN2 and DNA. Regulates the stability of ROG1. In Saccharomyces cerevisiae (strain ATCC 204508 / S288c) (Baker's yeast), this protein is Glycogen synthase kinase-3 homolog YGK3 (YGK3).